The primary structure comprises 1372 residues: Disease resistance protein RRS1B (1372 aa).

In terms of domain architecture, TIR spans 2-137 (TESEQIVYIS…ETVRDVYEKL (136 aa)). The NB-ARC domain maps to 166–417 (VGIWGMPGIG…GCGFFPHVGI (252 aa)). 170 to 177 (GMPGIGKT) lines the ATP pocket. One copy of the LRR 1 repeat lies at 491–515 (PEEIEGMFLDTSNLSFDIKHVAFDN). The LRR 2; degenerate repeat unit spans residues 528 to 544 (NPEVHHVNNFLKGSLSS). 10 LRR repeats span residues 545–568 (LPNVLRLLHWENYPLQFLPQNFDP), 570–591 (HLVEINMPYSQLKKLWGGTKDL), 614–637 (AQNLEVVDLQGCTRLQSFPATGQL), 638–658 (LHLRVVNLSGCTEIKSFPEIP), 659–681 (PNIETLNLQGTGIIELPLSIVKP), 693–718 (IPGLSGVSNLEQSDLKPLTSLMKIST), 723–747 (PGKLSCLELNDCSRLRSLPNMVNLE), 749–767 (LKALDLSGCSELETIQGFP), 768–792 (RNLKELYLVGTAVRQVPQLPQSLEF), and 798–823 (CVSLKSIRLDFKKLPVHYTFSNCFDL). A Nuclear localization signal motif is present at residues 950–964 (INLHCWALGKAVERD). A DNA-binding region (WRKY) is located at residues 1174 to 1240 (DRGSRSSDLW…YISEHNHPFP (67 aa)). Disordered stretches follow at residues 1246-1288 (LAGS…ASPP) and 1337-1372 (QTMFLSRRSSGGNMEAQGKNSSDDREVNLPSKILNR). The segment covering 1249-1269 (STRSSSSKCSDVTTSASSTVS) has biased composition (low complexity). A compositionally biased stretch (basic and acidic residues) spans 1270–1279 (QDKEGPDKSH). Residues 1337 to 1348 (QTMFLSRRSSGG) show a composition bias toward polar residues.

The protein belongs to the disease resistance TIR-NB-LRR family. In terms of assembly, interacts with RPS4B. RPS4B-RRS1B heterodimer interacts with the bacterial effectors AvrRps4 and PopP2.

The protein resides in the nucleus. Functionally, transcription factor. Interacts specifically with the W box (5'-(T)TGAC[CT]-3'), a frequently occurring elicitor-responsive cis-acting element. Also acts as a disease resistance protein that specifically recognizes the AvrRps4 type III effector avirulence protein from P.syringae. Heterodimerization with RPS4B is required to form a functional complex to recognize AvrRps4 and to mediate the hypersensitive response. The protein is Disease resistance protein RRS1B of Arabidopsis thaliana (Mouse-ear cress).